We begin with the raw amino-acid sequence, 175 residues long: Ribosome maturation factor RimM (175 aa).

The PRC barrel domain maps to 98–175; sequence EGEYYWHQLE…EMRVDWDADF (78 aa).

Belongs to the RimM family. In terms of assembly, binds ribosomal protein uS19.

The protein resides in the cytoplasm. An accessory protein needed during the final step in the assembly of 30S ribosomal subunit, possibly for assembly of the head region. Essential for efficient processing of 16S rRNA. May be needed both before and after RbfA during the maturation of 16S rRNA. It has affinity for free ribosomal 30S subunits but not for 70S ribosomes. The polypeptide is Ribosome maturation factor RimM (Pseudomonas aeruginosa (strain UCBPP-PA14)).